We begin with the raw amino-acid sequence, 156 residues long: Small ribosomal subunit protein uS7 (156 aa).

Belongs to the universal ribosomal protein uS7 family. Part of the 30S ribosomal subunit. Contacts proteins S9 and S11.

Functionally, one of the primary rRNA binding proteins, it binds directly to 16S rRNA where it nucleates assembly of the head domain of the 30S subunit. Is located at the subunit interface close to the decoding center, probably blocks exit of the E-site tRNA. In Bacillus mycoides (strain KBAB4) (Bacillus weihenstephanensis), this protein is Small ribosomal subunit protein uS7.